We begin with the raw amino-acid sequence, 557 residues long: Neurofilament light polypeptide (557 aa).

Ser-2 is modified (N-acetylserine). The head stretch occupies residues Ser-2 to Gln-89. Positions Glu-86–Leu-396 constitute an IF rod domain. Residues Leu-90–Leu-121 form a coil 1A region. The tract at residues Arg-122–Leu-134 is linker 1. The tract at residues Tyr-135–Leu-230 is coil 1B. Residues Gln-231 to Pro-248 form a linker 12 region. The coil 2A stretch occupies residues Asp-249 to Lys-267. Residues Asn-268–Phe-276 form a linker 2 region. Residues Lys-277–Glu-392 are coil 2B. A tail, subdomain A region spans residues Glu-393–Tyr-437. A tail region spans residues Glu-393–Lys-557. A tail, subdomain B (acidic) region spans residues Ser-438 to Lys-557. Residues Ile-452 to Lys-557 form a disordered region. The segment covering Glu-453 to Ala-464 has biased composition (basic and acidic residues). Acidic residues predominate over residues Pro-465 to Lys-538. A compositionally biased stretch (basic and acidic residues) spans Gly-539–Lys-548.

The protein belongs to the intermediate filament family. As to quaternary structure, forms homodimers (in vitro).

Its subcellular location is the cell projection. It is found in the axon. The protein localises to the cytoplasm. The protein resides in the cytoskeleton. Neurofilaments usually contain three intermediate filament proteins: NEFL, NEFM, and NEFH which are involved in the maintenance of neuronal caliber. May additionally cooperate with other neuronal intermediate filament proteins to form neuronal filamentous networks. The chain is Neurofilament light polypeptide (nefl) from Xenopus tropicalis (Western clawed frog).